The chain runs to 132 residues: Agouti-signaling protein (132 aa).

The first 22 residues, 1–22 (MDVTRLLLATLLVFLCFFTADS), serve as a signal peptide directing secretion. The N-linked (GlcNAc...) asparagine glycan is linked to asparagine 39. Positions 62–85 (ISRKEAEKKRSSKKEASMKTVARP) are disordered. A compositionally biased stretch (basic and acidic residues) spans 63 to 78 (SRKEAEKKRSSKKEAS). 5 disulfide bridges follow: cysteine 93-cysteine 108, cysteine 100-cysteine 114, cysteine 107-cysteine 125, cysteine 111-cysteine 132, and cysteine 116-cysteine 123. Residues 93 to 132 (CVATRNSCKPPAPACCDPCASCQCRFFRSACSCRVLSLNC) form the Agouti domain.

It localises to the secreted. In terms of biological role, involved in the regulation of melanogenesis. The binding of ASP to MC1R precludes alpha-MSH initiated signaling and thus blocks production of cAMP, leading to a down-regulation of eumelanogenesis (brown/black pigment) and thus increasing synthesis of pheomelanin (yellow/red pigment). This Pongo pygmaeus (Bornean orangutan) protein is Agouti-signaling protein (ASIP).